Reading from the N-terminus, the 254-residue chain is Cyclin homolog (254 aa).

This sequence belongs to the cyclin family. Cyclin D subfamily.

Functionally, may be highly relevant to the process of cellular transformation and rapid T-cell proliferation effected by HVS during latent infections of T-cells in susceptible hosts. The chain is Cyclin homolog (72) from Saimiriine herpesvirus 2 (strain 11) (SaHV-2).